Here is a 389-residue protein sequence, read N- to C-terminus: Succinate--CoA ligase [ADP-forming] subunit beta (389 aa).

In terms of domain architecture, ATP-grasp spans lysine 9–lysine 236. Residues lysine 45, glycine 52–glycine 54, serine 94, and glutamate 99 each bind ATP. Positions 191 and 205 each coordinate Mg(2+). Substrate contacts are provided by residues asparagine 256 and glycine 318–threonine 320.

It belongs to the succinate/malate CoA ligase beta subunit family. Heterotetramer of two alpha and two beta subunits. The cofactor is Mg(2+).

The enzyme catalyses succinate + ATP + CoA = succinyl-CoA + ADP + phosphate. The catalysed reaction is GTP + succinate + CoA = succinyl-CoA + GDP + phosphate. It functions in the pathway carbohydrate metabolism; tricarboxylic acid cycle; succinate from succinyl-CoA (ligase route): step 1/1. In terms of biological role, succinyl-CoA synthetase functions in the citric acid cycle (TCA), coupling the hydrolysis of succinyl-CoA to the synthesis of either ATP or GTP and thus represents the only step of substrate-level phosphorylation in the TCA. The beta subunit provides nucleotide specificity of the enzyme and binds the substrate succinate, while the binding sites for coenzyme A and phosphate are found in the alpha subunit. The polypeptide is Succinate--CoA ligase [ADP-forming] subunit beta (Rhodococcus opacus (strain B4)).